The sequence spans 820 residues: Ribosome biogenesis protein ERB1 (820 aa).

Residues 1 to 111 are disordered; it reads MVRSRSNSVK…SDAGDDEVDP (111 aa). Positions 9–19 are enriched in basic and acidic residues; sequence VKKDLKRKVDE. The span at 20-48 shows a compositional bias: acidic residues; sequence PVDVQDEFDVEGLIDEGDSDDEDEAEQEV. A compositionally biased stretch (basic and acidic residues) spans 53-64; it reads VTKDKKNTSKTE. Over residues 65–110 the composition is skewed to acidic residues; sequence NEEDADDESDSDAELEALIGEEEDLSGSELEDELAYFSDAGDDEVD. The segment at 282–395 is required for interaction with NOP7; that stretch reads RFIPSKHEAK…LRHVPGYSES (114 aa). The tract at residues 395 to 431 is required for interaction with YTM1; the sequence is SVRERFERSLDLYLAPRVRKNKLNIDPDSLIPDLPSP. WD repeat units follow at residues 447-486 and 495-535; these read GHKG…ELYR and AQDD…FDIE. The interval 545–585 is disordered; sequence GWGFAEGGREQQDIDTKGLDDDADSDSDDETGHVKKKSPPA. A compositionally biased stretch (basic and acidic residues) spans 551–564; it reads GGREQQDIDTKGLD. WD repeat units lie at residues 604–646, 649–687, 690–729, 733–773, and 789–820; these read TATK…SQSP, KSKG…MAKK, PGAR…KPYK, YHEK…DMMT, and KSGL…LWTT.

Belongs to the WD repeat BOP1/ERB1 family. As to quaternary structure, component of the NOP7 complex, composed of ERB1, NOP7 and YTM1. The complex is held together by ERB1, which interacts with NOP7 via its N-terminal domain and with YTM1 via a high-affinity interaction between the seven-bladed beta-propeller domains of the 2 proteins. The NOP7 complex associates with the 66S pre-ribosome.

It localises to the nucleus. Its subcellular location is the nucleolus. The protein resides in the nucleoplasm. Its function is as follows. Component of the NOP7 complex, which is required for maturation of the 25S and 5.8S ribosomal RNAs and formation of the 60S ribosome. The protein is Ribosome biogenesis protein ERB1 of Yarrowia lipolytica (strain CLIB 122 / E 150) (Yeast).